Reading from the N-terminus, the 343-residue chain is Ribosomal RNA small subunit methyltransferase C (343 aa).

It belongs to the methyltransferase superfamily. RsmC family. As to quaternary structure, monomer.

The protein resides in the cytoplasm. The catalysed reaction is guanosine(1207) in 16S rRNA + S-adenosyl-L-methionine = N(2)-methylguanosine(1207) in 16S rRNA + S-adenosyl-L-homocysteine + H(+). Functionally, specifically methylates the guanine in position 1207 of 16S rRNA in the 30S particle. In Escherichia coli O6:H1 (strain CFT073 / ATCC 700928 / UPEC), this protein is Ribosomal RNA small subunit methyltransferase C.